The primary structure comprises 24 residues: Brevinin-1JDb (24 aa).

A disulfide bond links cysteine 18 and cysteine 24.

As to expression, expressed by the skin glands.

The protein resides in the secreted. Has antibacterial activity against E.coli and S.aureus strains. Has antifungal activity against C.albicans. Has hemolytic activity against rabbit erythrocytes. This chain is Brevinin-1JDb, found in Odorrana jingdongensis (Jingdong frog).